A 459-amino-acid polypeptide reads, in one-letter code: MNQNPVEEGQKFPLTIRRMGINGEGIGYFKKAVVFVPGAITGEEVVVEAVKVRDRFTEAKLNKIRKKSPNRVTAPCPVYEACGGCQLQHVAYSAQLELKRDIVIQSIEKHTKIDPTKLKIRPTIGMEDPWRYRNKSQFQTRMVGSGQVETGLFGANSHQLVPIEDCIVQQPVTIKVTNFVRDLLEKYGVPIYDEKAGSGIVRTIVVRTGVKTGETQLVFITNSKKLPKKREMLAEIEAALPEVTSIMQNVNQAKSSLIFGDETFLLAGKESIEEKLMELEFDLSARAFFQLNPFQTERLYQEVEKALVLTGSETLVDAYCGVGTIGQAFAGKVKEVRGMDIIPESIEDAKRNAEKNGIENVYYEVGKAEDVLPKWVNEGFRPDAVIVDPPRSGCDQGLIKSLLDVEAKQLVYVSCNPSTLARDLALLAKKYRIRYMQPVDMFPQTAHVETVVLLQLKDK.

The TRAM domain maps to 5-63 (PVEEGQKFPLTIRRMGINGEGIGYFKKAVVFVPGAITGEEVVVEAVKVRDRFTEAKLNK). [4Fe-4S] cluster contacts are provided by cysteine 76, cysteine 82, cysteine 85, and cysteine 166. Glutamine 290, tyrosine 319, aspartate 340, and aspartate 388 together coordinate S-adenosyl-L-methionine. Catalysis depends on cysteine 415, which acts as the Nucleophile.

It belongs to the class I-like SAM-binding methyltransferase superfamily. RNA M5U methyltransferase family.

This is an uncharacterized protein from Listeria monocytogenes serotype 4b (strain F2365).